A 283-amino-acid polypeptide reads, in one-letter code: Diaminopimelate epimerase (283 aa).

Asn-13, Gln-45, and Asn-65 together coordinate substrate. Cys-74 (proton donor) is an active-site residue. Residues 75 to 76 (GN), Asn-156, Asn-190, and 208 to 209 (ER) each bind substrate. Cys-217 functions as the Proton acceptor in the catalytic mechanism. Substrate is bound at residue 218–219 (GS).

This sequence belongs to the diaminopimelate epimerase family. In terms of assembly, homodimer.

The protein localises to the cytoplasm. The enzyme catalyses (2S,6S)-2,6-diaminopimelate = meso-2,6-diaminopimelate. It participates in amino-acid biosynthesis; L-lysine biosynthesis via DAP pathway; DL-2,6-diaminopimelate from LL-2,6-diaminopimelate: step 1/1. In terms of biological role, catalyzes the stereoinversion of LL-2,6-diaminopimelate (L,L-DAP) to meso-diaminopimelate (meso-DAP), a precursor of L-lysine and an essential component of the bacterial peptidoglycan. In Bartonella tribocorum (strain CIP 105476 / IBS 506), this protein is Diaminopimelate epimerase.